Reading from the N-terminus, the 95-residue chain is Large ribosomal subunit protein uL23 (95 aa).

Belongs to the universal ribosomal protein uL23 family. In terms of assembly, part of the 50S ribosomal subunit. Contacts protein L29, and trigger factor when it is bound to the ribosome.

In terms of biological role, one of the early assembly proteins it binds 23S rRNA. One of the proteins that surrounds the polypeptide exit tunnel on the outside of the ribosome. Forms the main docking site for trigger factor binding to the ribosome. The sequence is that of Large ribosomal subunit protein uL23 from Bacillus licheniformis (strain ATCC 14580 / DSM 13 / JCM 2505 / CCUG 7422 / NBRC 12200 / NCIMB 9375 / NCTC 10341 / NRRL NRS-1264 / Gibson 46).